A 613-amino-acid chain; its full sequence is 9-cis-epoxycarotenoid dioxygenase NCED5, chloroplastic (613 aa).

Positions 1–15 (MPTTFTPNSPASSCS) are enriched in polar residues. The N-terminal 36 residues, 1–36 (MPTTFTPNSPASSCSIHHRASPSRGARNSVRFTRPR), are a transit peptide targeting the chloroplast. A disordered region spans residues 1–62 (MPTTFTPNSP…PPAYVPPPPP (62 aa)). A compositionally biased stretch (low complexity) spans 37-50 (AAAAATNSVLSAPS). The span at 51 to 62 (SVPPAYVPPPPP) shows a compositional bias: pro residues. Residues His305, His354, His419, and His600 each contribute to the Fe cation site.

Belongs to the carotenoid oxygenase family. Fe(2+) is required as a cofactor.

It localises to the plastid. Its subcellular location is the chloroplast. It catalyses the reaction a 9-cis-epoxycarotenoid + O2 = a 12'-apo-carotenal + 2-cis,4-trans-xanthoxin. It carries out the reaction 9-cis-violaxanthin + O2 = (3S,5R,6S)-5,6-epoxy-3-hydroxy-5,6-dihydro-12'-apo-beta-caroten-12'-al + 2-cis,4-trans-xanthoxin. The enzyme catalyses 9'-cis-neoxanthin + O2 = (3S,5R,6R)-3,5-dihydroxy-6,7-didehydro-5,6-dihydro-12'-apo-beta-caroten-12'-al + 2-cis,4-trans-xanthoxin. In terms of biological role, has a 11,12(11',12') 9-cis epoxycarotenoid cleavage activity. Catalyzes the first step of abscisic-acid biosynthesis from carotenoids. This Oryza sativa subsp. japonica (Rice) protein is 9-cis-epoxycarotenoid dioxygenase NCED5, chloroplastic.